The primary structure comprises 398 residues: Mannitol-1-phosphate 5-dehydrogenase (398 aa).

Residue 10–21 coordinates NAD(+); sequence AVHFGAGNIGRG. The active site involves lysine 221.

It belongs to the mannitol dehydrogenase family. In terms of assembly, monomer.

It carries out the reaction D-mannitol 1-phosphate + NAD(+) = beta-D-fructose 6-phosphate + NADH + H(+). Functionally, catalyzes the NAD(H)-dependent interconversion of D-fructose 6-phosphate and D-mannitol 1-phosphate in the mannitol metabolic pathway. The chain is Mannitol-1-phosphate 5-dehydrogenase from Chaetomium globosum (strain ATCC 6205 / CBS 148.51 / DSM 1962 / NBRC 6347 / NRRL 1970) (Soil fungus).